A 250-amino-acid polypeptide reads, in one-letter code: 2,3-bisphosphoglycerate-dependent phosphoglycerate mutase (250 aa).

Substrate-binding positions include 10–17, 23–24, Arg-62, 89–92, Lys-100, 116–117, and 185–186; these read RHGESQWN, TG, ERHY, RR, and GN. The active-site Tele-phosphohistidine intermediate is the His-11. Glu-89 functions as the Proton donor/acceptor in the catalytic mechanism.

Belongs to the phosphoglycerate mutase family. BPG-dependent PGAM subfamily. Homodimer.

It carries out the reaction (2R)-2-phosphoglycerate = (2R)-3-phosphoglycerate. Its pathway is carbohydrate degradation; glycolysis; pyruvate from D-glyceraldehyde 3-phosphate: step 3/5. Catalyzes the interconversion of 2-phosphoglycerate and 3-phosphoglycerate. The protein is 2,3-bisphosphoglycerate-dependent phosphoglycerate mutase of Serratia proteamaculans (strain 568).